The sequence spans 331 residues: 3-dehydroquinate synthase homolog (331 aa).

It belongs to the archaeal-type DHQ synthase family.

The polypeptide is 3-dehydroquinate synthase homolog (Aquifex aeolicus (strain VF5)).